A 216-amino-acid polypeptide reads, in one-letter code: Adenylate kinase (216 aa).

10 to 15 (GAGKGT) lines the ATP pocket. Positions 30–59 (STGDIFRKNISNKTPLGMEAKSYMDKGQLV) are NMP. AMP is bound by residues Thr-31, Arg-36, 57 to 59 (QLV), 85 to 88 (GFPR), and Gln-92. The tract at residues 126 to 163 (GRRVCGECGASYHIKFITPKTEGVCDLCGGKLVQRKDD) is LID. ATP is bound at residue Arg-127. Residues Cys-130 and Cys-133 each coordinate Zn(2+). An ATP-binding site is contributed by 136–137 (SY). Zn(2+) contacts are provided by Cys-150 and Cys-153. AMP is bound by residues Arg-160 and Arg-171. Residue Lys-199 participates in ATP binding.

Belongs to the adenylate kinase family. As to quaternary structure, monomer.

The protein resides in the cytoplasm. It carries out the reaction AMP + ATP = 2 ADP. It participates in purine metabolism; AMP biosynthesis via salvage pathway; AMP from ADP: step 1/1. Catalyzes the reversible transfer of the terminal phosphate group between ATP and AMP. Plays an important role in cellular energy homeostasis and in adenine nucleotide metabolism. This chain is Adenylate kinase, found in Clostridium tetani (strain Massachusetts / E88).